A 329-amino-acid chain; its full sequence is Elongation factor Ts (329 aa).

The interval 79 to 82 is involved in Mg(2+) ion dislocation from EF-Tu; that stretch reads TDFV.

Belongs to the EF-Ts family.

The protein resides in the cytoplasm. Its function is as follows. Associates with the EF-Tu.GDP complex and induces the exchange of GDP to GTP. It remains bound to the aminoacyl-tRNA.EF-Tu.GTP complex up to the GTP hydrolysis stage on the ribosome. The polypeptide is Elongation factor Ts (Parabacteroides distasonis (strain ATCC 8503 / DSM 20701 / CIP 104284 / JCM 5825 / NCTC 11152)).